A 380-amino-acid chain; its full sequence is uncharacterized protein (380 aa).

Disordered stretches follow at residues 278–323 and 345–368; these read AATI…PRVA and SLPG…RPRR. Positions 301–319 are enriched in basic residues; sequence RNGPRRPARRGTSRGRRCA.

This is an uncharacterized protein from Mycobacterium tuberculosis (strain CDC 1551 / Oshkosh).